Reading from the N-terminus, the 139-residue chain is GATA transcription factor 16 (139 aa).

The GATA-type zinc-finger motif lies at asparagine 32–serine 86. Positions asparagine 67–lysine 98 are disordered.

This sequence belongs to the type IV zinc-finger family. Class B subfamily.

It is found in the nucleus. Its function is as follows. Transcriptional regulator that specifically binds 5'-GATA-3' or 5'-GAT-3' motifs within gene promoters. This Arabidopsis thaliana (Mouse-ear cress) protein is GATA transcription factor 16 (GATA16).